The sequence spans 291 residues: MERLFKHICLVARHSKPGITPALMQLANHLAAGGATVLIDKESVTPDEANGYPLIDRTDMGKLADLCIVLGGDGTMLSIARLLAPYRVPLVGINQGRLGFMTDIPLHEMLDSVDAILHGKFVPEDRILLQAAVVREDAEVASALAFNDVVFSRGAVGSMIEFEVFIDNQFVYSQRSDGLIVSTPTGSTAYSLASGGPILHPTLQAIALVPICPQSLSNRPIAVNDSCEVEFMLTRGLDARVHFDGQLHCDLMEMDRVLIRRYRNPLRILHPEGYNYYDMLRHKLHWGERLI.

Asp73 (proton acceptor) is an active-site residue. NAD(+) is bound by residues 73 to 74 (DG), 147 to 148 (ND), Arg175, Asp177, and Gln246.

It belongs to the NAD kinase family. The cofactor is a divalent metal cation.

The protein resides in the cytoplasm. It catalyses the reaction NAD(+) + ATP = ADP + NADP(+) + H(+). Its function is as follows. Involved in the regulation of the intracellular balance of NAD and NADP, and is a key enzyme in the biosynthesis of NADP. Catalyzes specifically the phosphorylation on 2'-hydroxyl of the adenosine moiety of NAD to yield NADP. The polypeptide is NAD kinase (Chromobacterium violaceum (strain ATCC 12472 / DSM 30191 / JCM 1249 / CCUG 213 / NBRC 12614 / NCIMB 9131 / NCTC 9757 / MK)).